Here is a 162-residue protein sequence, read N- to C-terminus: MTAIQHFFKTFFLTELLKGLALTGRYTFKRKFTVQFPEEKTPISPRFRGLHALRRYENGEERCIACKLCEAVCPALAITIESETRADNTRRTTRYDIDLTKCIFCGFCEESCPVDSIVETQILEYHGEKRGDLYFTKEMLLAVGDRYEKDIAAAKAADAPYR.

2 consecutive 4Fe-4S ferredoxin-type domains span residues 54–83 (RRYE…IESE) and 93–122 (TRYD…ETQI). Residues Cys-63, Cys-66, Cys-69, Cys-73, Cys-102, Cys-105, Cys-108, and Cys-112 each contribute to the [4Fe-4S] cluster site.

It belongs to the complex I 23 kDa subunit family. As to quaternary structure, NDH-1 is composed of 14 different subunits. Subunits NuoA, H, J, K, L, M, N constitute the membrane sector of the complex. [4Fe-4S] cluster serves as cofactor.

The protein localises to the cell inner membrane. It carries out the reaction a quinone + NADH + 5 H(+)(in) = a quinol + NAD(+) + 4 H(+)(out). In terms of biological role, NDH-1 shuttles electrons from NADH, via FMN and iron-sulfur (Fe-S) centers, to quinones in the respiratory chain. The immediate electron acceptor for the enzyme in this species is believed to be ubiquinone. Couples the redox reaction to proton translocation (for every two electrons transferred, four hydrogen ions are translocated across the cytoplasmic membrane), and thus conserves the redox energy in a proton gradient. This is NADH-quinone oxidoreductase subunit I from Burkholderia cenocepacia (strain HI2424).